The chain runs to 353 residues: Uroporphyrinogen decarboxylase (353 aa).

Residues 26-30, D75, Y161, S216, and H332 contribute to the substrate site; that span reads RQAGR.

Belongs to the uroporphyrinogen decarboxylase family. Homodimer.

The protein resides in the cytoplasm. It catalyses the reaction uroporphyrinogen III + 4 H(+) = coproporphyrinogen III + 4 CO2. It functions in the pathway porphyrin-containing compound metabolism; protoporphyrin-IX biosynthesis; coproporphyrinogen-III from 5-aminolevulinate: step 4/4. Catalyzes the decarboxylation of four acetate groups of uroporphyrinogen-III to yield coproporphyrinogen-III. The polypeptide is Uroporphyrinogen decarboxylase (Gluconacetobacter diazotrophicus (strain ATCC 49037 / DSM 5601 / CCUG 37298 / CIP 103539 / LMG 7603 / PAl5)).